A 473-amino-acid chain; its full sequence is Suppressor of SWI4 1 homolog (473 aa).

Residues 29–292 (PHSFVFTRGC…LIKVQEGVGE (264 aa)) form the Brix domain. Ser238 and Ser240 each carry phosphoserine. The interval 323 to 473 (AQRQAQQAQN…GRGRPRKRVA (151 aa)) is disordered. Low complexity predominate over residues 324 to 334 (QRQAQQAQNVQ). The segment covering 335 to 360 (RKQEQREAHRKKSLEGMKKARVRGGD) has biased composition (basic and acidic residues). A compositionally biased stretch (acidic residues) spans 376 to 388 (GEDDDEQEDDDIE). A compositionally biased stretch (basic residues) spans 407-421 (KRKRLAKSPGQKRKR). Over residues 422 to 444 (REMDRGRGRLCDQKFPKPKDKSH) the composition is skewed to basic and acidic residues. An N6-acetyllysine modification is found at Lys438. The span at 464–473 (GRGRPRKRVA) shows a compositional bias: basic residues.

The protein resides in the nucleus. It localises to the nucleolus. Functionally, may have a role in cell growth. In Pongo abelii (Sumatran orangutan), this protein is Suppressor of SWI4 1 homolog (PPAN).